We begin with the raw amino-acid sequence, 309 residues long: Voltage-dependent anion channel-forming protein mll4386 (309 aa).

Transmembrane regions (helical) follow at residues 32 to 52, 58 to 78, and 227 to 247; these read ILPQIFGFAVYSAVILALARW, GVFNITPFGLVGVTLSIYLSF, and IVCLLLPIGLISTTGWATPLF.

Belongs to the anion channel-forming bestrophin (TC 1.A.46) family.

The protein localises to the cell membrane. The polypeptide is Voltage-dependent anion channel-forming protein mll4386 (Mesorhizobium japonicum (strain LMG 29417 / CECT 9101 / MAFF 303099) (Mesorhizobium loti (strain MAFF 303099))).